Reading from the N-terminus, the 241-residue chain is Probable transcriptional regulatory protein Rpic_2388 (241 aa).

This sequence belongs to the TACO1 family.

The protein localises to the cytoplasm. The chain is Probable transcriptional regulatory protein Rpic_2388 from Ralstonia pickettii (strain 12J).